Reading from the N-terminus, the 413-residue chain is N5-carboxyaminoimidazole ribonucleotide synthase (413 aa).

A disordered region spans residues 1-21; the sequence is MKRVSEQAGNPDGNPQAHVPG. Residues lysine 122, lysine 162, 199–202, glutamate 207, and 289–290 each bind ATP; these read EEKV and NE. In terms of domain architecture, ATP-grasp spans 126 to 319; that stretch reads RERLAELGAP…QFEQHLRAVM (194 aa).

This sequence belongs to the PurK/PurT family. Homodimer.

It carries out the reaction 5-amino-1-(5-phospho-beta-D-ribosyl)imidazole + hydrogencarbonate + ATP = 5-carboxyamino-1-(5-phospho-D-ribosyl)imidazole + ADP + phosphate + 2 H(+). Its pathway is purine metabolism; IMP biosynthesis via de novo pathway; 5-amino-1-(5-phospho-D-ribosyl)imidazole-4-carboxylate from 5-amino-1-(5-phospho-D-ribosyl)imidazole (N5-CAIR route): step 1/2. Catalyzes the ATP-dependent conversion of 5-aminoimidazole ribonucleotide (AIR) and HCO(3)(-) to N5-carboxyaminoimidazole ribonucleotide (N5-CAIR). In Corynebacterium ammoniagenes (Brevibacterium ammoniagenes), this protein is N5-carboxyaminoimidazole ribonucleotide synthase.